The following is a 1049-amino-acid chain: Retinoblastoma-like protein 1 (1049 aa).

3 positions are modified to phosphothreonine: threonine 332, threonine 369, and threonine 385. Residues 385–584 form a domain A region; that stretch reads TPVASATQSV…WEALRASANK (200 aa). The segment at 385–944 is pocket; binds T and E1A; sequence TPVASATQSV…GRVKSFALKY (560 aa). Residues 585-779 are spacer; that stretch reads VPSCEEVIFP…TQDAPLTGIS (195 aa). Phosphoserine occurs at positions 640, 650, 748, and 761. Residues 780–944 form a domain B region; it reads KPKRTGSLAL…GRVKSFALKY (165 aa). Serine 959, serine 970, and serine 983 each carry phosphoserine. Threonine 992 is modified (phosphothreonine). Residues serine 1004 and serine 1022 each carry the phosphoserine modification.

The protein belongs to the retinoblastoma protein (RB) family. As to quaternary structure, component of the DREAM complex (also named LINC complex) at least composed of E2F4, E2F5, LIN9, LIN37, LIN52, LIN54, MYBL1, MYBL2, RBL1, RBL2, RBBP4, TFDP1 and TFDP2. The complex exists in quiescent cells where it represses cell cycle-dependent genes. It dissociates in S phase when LIN9, LIN37, LIN52 and LIN54 form a subcomplex that binds to MYBL2. Interacts with AATF. Interacts with KDM5A. Interacts with KMT5B and KMT5C. Interacts with USP4. Interacts with RBBP9. Cell-cycle arrest properties are inactivated by phosphorylation on Thr-332, Ser-640, Ser-959 and Ser-970 by CDK4.

The protein resides in the nucleus. Its function is as follows. Key regulator of entry into cell division. Directly involved in heterochromatin formation by maintaining overall chromatin structure and, in particular, that of constitutive heterochromatin by stabilizing histone methylation. Recruits and targets histone methyltransferases KMT5B and KMT5C, leading to epigenetic transcriptional repression. Controls histone H4 'Lys-20' trimethylation. Probably acts as a transcription repressor by recruiting chromatin-modifying enzymes to promoters. Potent inhibitor of E2F-mediated trans-activation. May act as a tumor suppressor. This chain is Retinoblastoma-like protein 1, found in Rattus norvegicus (Rat).